Consider the following 401-residue polypeptide: uncharacterized protein (401 aa).

It belongs to the herpesviridae BTRF1 family.

This is an uncharacterized protein from Connochaetes taurinus (Blue wildebeest).